A 162-amino-acid chain; its full sequence is Cytochrome c-type biogenesis protein CcmE (162 aa).

Over 1–7 (MTRKQRR) the chain is Cytoplasmic. The chain crosses the membrane as a helical; Signal-anchor for type II membrane protein span at residues 8–28 (LTMIGGSLVVLAIAAALVLNA). The Periplasmic segment spans residues 29 to 162 (LRDSIVFFST…EASGKQGVSQ (134 aa)). Heme is bound by residues histidine 122 and tyrosine 126. The segment at 138 to 162 (QGHWKDDYGPQAGAVEASGKQGVSQ) is disordered.

The protein belongs to the CcmE/CycJ family.

The protein resides in the cell inner membrane. Functionally, heme chaperone required for the biogenesis of c-type cytochromes. Transiently binds heme delivered by CcmC and transfers the heme to apo-cytochromes in a process facilitated by CcmF and CcmH. This chain is Cytochrome c-type biogenesis protein CcmE, found in Nitrobacter hamburgensis (strain DSM 10229 / NCIMB 13809 / X14).